Here is a 128-residue protein sequence, read N- to C-terminus: Large ribosomal subunit protein bL12 (128 aa).

It belongs to the bacterial ribosomal protein bL12 family. Homodimer. Part of the ribosomal stalk of the 50S ribosomal subunit. Forms a multimeric L10(L12)X complex, where L10 forms an elongated spine to which 2 to 4 L12 dimers bind in a sequential fashion. Binds GTP-bound translation factors.

Functionally, forms part of the ribosomal stalk which helps the ribosome interact with GTP-bound translation factors. Is thus essential for accurate translation. The chain is Large ribosomal subunit protein bL12 from Kocuria rhizophila (strain ATCC 9341 / DSM 348 / NBRC 103217 / DC2201).